The primary structure comprises 252 residues: 3-dehydroquinate dehydratase (252 aa).

Residues serine 21, 46–48 (EWR), and arginine 82 each bind 3-dehydroquinate. Catalysis depends on histidine 143, which acts as the Proton donor/acceptor. Lysine 170 (schiff-base intermediate with substrate) is an active-site residue. The 3-dehydroquinate site is built by arginine 213, serine 232, and glutamine 236.

Belongs to the type-I 3-dehydroquinase family. Homodimer.

The catalysed reaction is 3-dehydroquinate = 3-dehydroshikimate + H2O. Its pathway is metabolic intermediate biosynthesis; chorismate biosynthesis; chorismate from D-erythrose 4-phosphate and phosphoenolpyruvate: step 3/7. Functionally, involved in the third step of the chorismate pathway, which leads to the biosynthesis of aromatic amino acids. Catalyzes the cis-dehydration of 3-dehydroquinate (DHQ) and introduces the first double bond of the aromatic ring to yield 3-dehydroshikimate. This is 3-dehydroquinate dehydratase from Escherichia coli O17:K52:H18 (strain UMN026 / ExPEC).